Here is a 338-residue protein sequence, read N- to C-terminus: Peptidoglycan deacetylase-like protein FGM2 (338 aa).

Positions 49, 124, and 128 each coordinate Zn(2+). One can recognise a NodB homology domain in the interval 65-257; the sequence is LSDYSAGIFA…VTNSHGFVSS (193 aa).

This sequence belongs to the polysaccharide deacetylase family.

In terms of biological role, peptidoglycan deacetylase-like protein; part of the Fg3_54/C64 gene cluster that mediates the biosynthesis of the octapeptide fusaoctaxin A, a virulence factor that is required for cell-to-cell invasiveness of plant host. The 2 nonribosomal peptide synthetases NRPS9 and NRPS5 form an assembly line which likely utilizes GABA as a starter unit (loaded on the unique module M1 of NRPS9) and sequentially incorporates seven extender units composed of the residues L-Ala, L-allo-Ile, L-Ser, L-Val, L-Ser, L-Leu and L-Leu, respectively. During the process, each of the residues that are tethered on modules M3-M7 of NRPS5 containing an E domain can undergo an epimerization reaction to produce a D-configuration before the transpeptidation reaction occurs. The elongation of the peptidyl chain might be terminated by module M8-mediated L-Leu incorporation, followed by R domain-catalyzed 4 electron reduction to release the resulting octapeptide from the assembly line as an alcohol. Fusaoctaxin A is cleaved by the cluster specific ABC transporter FGM5 to the pentapeptide fusapentaxin A and the tripeptide fusatrixin A. The other enzymes from the cluster, FGM1, FGM2, FGM3 and FGM9 seem not to be involved in the biosynthesis of fusaoctaxin A and their functions have still to be determined. The chain is Peptidoglycan deacetylase-like protein FGM2 from Gibberella zeae (strain ATCC MYA-4620 / CBS 123657 / FGSC 9075 / NRRL 31084 / PH-1) (Wheat head blight fungus).